The chain runs to 398 residues: Na(+)/H(+) antiporter NhaA (398 aa).

12 helical membrane-spanning segments follow: residues 9–29 (MITH…AAIV), 57–77 (LSLL…AVGL), 95–115 (AFPA…YSLM), 124–144 (AGWA…LALL), 154–174 (VFML…IALF), 177–197 (TALE…MALM), 204–224 (FLSL…LSGI), 226–246 (ATLA…STEV), 255–275 (WLQP…NAGI), 288–308 (FLPL…IVLF), 329–349 (IAAA…IANL), and 359–379 (IVLA…LGYL).

This sequence belongs to the NhaA Na(+)/H(+) (TC 2.A.33) antiporter family.

Its subcellular location is the cell inner membrane. It catalyses the reaction Na(+)(in) + 2 H(+)(out) = Na(+)(out) + 2 H(+)(in). In terms of biological role, na(+)/H(+) antiporter that extrudes sodium in exchange for external protons. The chain is Na(+)/H(+) antiporter NhaA from Sodalis glossinidius (strain morsitans).